The following is a 312-amino-acid chain: uncharacterized protein (312 aa).

Composition is skewed to basic and acidic residues over residues Met-1–Glu-17 and Pro-28–Leu-39. Residues Met-1–Leu-39 are disordered.

This is an uncharacterized protein from Sinorhizobium fredii (strain NBRC 101917 / NGR234).